We begin with the raw amino-acid sequence, 440 residues long: 5-hydroxytryptamine receptor 6 (440 aa).

At Met-1–Gly-27 the chain is on the extracellular side. Asn-9 is a glycosylation site (N-linked (GlcNAc...) asparagine). A helical membrane pass occupies residues Trp-28–Cys-52. Topologically, residues Thr-53 to Asn-62 are cytoplasmic. A helical membrane pass occupies residues Phe-63–Leu-88. Over Tyr-89–Arg-96 the chain is Extracellular. The helical transmembrane segment at Gly-97 to Leu-122 threads the bilayer. Cys-99 and Cys-180 form a disulfide bridge. Asp-106 provides a ligand contact to serotonin. The Cytoplasmic segment spans residues Asp-123–Arg-142. The chain crosses the membrane as a helical span at residues Ala-143–His-167. The Extracellular segment spans residues Glu-168 to Ser-185. A helical transmembrane segment spans residues Leu-186 to Cys-209. Residues Arg-210–Ala-268 are Cytoplasmic-facing. Residues Ser-269–Val-295 traverse the membrane as a helical segment. The Extracellular portion of the chain corresponds to Cys-296 to Pro-301. Residues Gly-302–Phe-325 form a helical membrane-spanning segment. Over Met-326–Asn-440 the chain is Cytoplasmic.

Belongs to the G-protein coupled receptor 1 family. In terms of assembly, interacts with CDK5. Interacts with MTOR. Interacts with RPTOR and NF1.

The protein resides in the cell membrane. Functionally, G-protein coupled receptor for 5-hydroxytryptamine (serotonin), a biogenic hormone that functions as a neurotransmitter, a hormone and a mitogen. Also has a high affinity for tricyclic psychotropic drugs. Ligand binding causes a conformation change that triggers signaling via guanine nucleotide-binding proteins (G proteins) and modulates the activity of downstream effectors. HTR6 is coupled to G(s) G alpha proteins and mediates activation of adenylate cyclase activity. Controls pyramidal neurons migration during corticogenesis, through the regulation of CDK5 activity. Is an activator of mTOR signaling. This chain is 5-hydroxytryptamine receptor 6, found in Mus musculus (Mouse).